A 545-amino-acid chain; its full sequence is CTP synthase (545 aa).

An amidoligase domain region spans residues 1 to 266 (MTTNYIFVTG…DDYICKRFSL (266 aa)). S14 provides a ligand contact to CTP. Position 14 (S14) interacts with UTP. ATP-binding positions include 15–20 (SLGKGI) and D72. Mg(2+) is bound by residues D72 and E140. CTP contacts are provided by residues 147–149 (DIE), 187–192 (KTKPTQ), and K223. Residues 187–192 (KTKPTQ) and K223 contribute to the UTP site. Residue 239–241 (KDV) coordinates ATP. In terms of domain architecture, Glutamine amidotransferase type-1 spans 291 to 542 (TIGMVGKYIE…VKAASEYQKR (252 aa)). G352 contributes to the L-glutamine binding site. The Nucleophile; for glutamine hydrolysis role is filled by C379. L-glutamine is bound by residues 380-383 (LGMQ), E403, and R470. Catalysis depends on residues H515 and E517.

It belongs to the CTP synthase family. In terms of assembly, homotetramer.

The catalysed reaction is UTP + L-glutamine + ATP + H2O = CTP + L-glutamate + ADP + phosphate + 2 H(+). The enzyme catalyses L-glutamine + H2O = L-glutamate + NH4(+). It carries out the reaction UTP + NH4(+) + ATP = CTP + ADP + phosphate + 2 H(+). Its pathway is pyrimidine metabolism; CTP biosynthesis via de novo pathway; CTP from UDP: step 2/2. With respect to regulation, allosterically activated by GTP, when glutamine is the substrate; GTP has no effect on the reaction when ammonia is the substrate. The allosteric effector GTP functions by stabilizing the protein conformation that binds the tetrahedral intermediate(s) formed during glutamine hydrolysis. Inhibited by the product CTP, via allosteric rather than competitive inhibition. Its function is as follows. Catalyzes the ATP-dependent amination of UTP to CTP with either L-glutamine or ammonia as the source of nitrogen. Regulates intracellular CTP levels through interactions with the four ribonucleotide triphosphates. The polypeptide is CTP synthase (Klebsiella pneumoniae subsp. pneumoniae (strain ATCC 700721 / MGH 78578)).